We begin with the raw amino-acid sequence, 331 residues long: Pseudouridylate synthase TRUB2, mitochondrial (331 aa).

D98 (nucleophile) is an active-site residue. Residues 309-331 (STGQPWGLKDPSSTLELESCSGQ) are disordered. Polar residues predominate over residues 319 to 331 (PSSTLELESCSGQ).

Belongs to the pseudouridine synthase TruB family. As to quaternary structure, forms a regulatory protein-RNA complex, consisting of RCC1L, NGRN, RPUSD3, RPUSD4, TRUB2, FASTKD2 and 16S mt-rRNA.

Its subcellular location is the mitochondrion matrix. The catalysed reaction is a uridine in mRNA = a pseudouridine in mRNA. It catalyses the reaction uridine(55) in tRNA = pseudouridine(55) in tRNA. Its function is as follows. Minor enzyme contributing to the isomerization of uridine to pseudouridine (pseudouridylation) of specific mitochondrial mRNAs (mt-mRNAs) such as COXI and COXIII mt-mRNAs. As a component of a functional protein-RNA module, consisting of RCC1L, NGRN, RPUSD3, RPUSD4, TRUB2, FASTKD2 and 16S mitochondrial ribosomal RNA (16S mt-rRNA), controls 16S mt-rRNA abundance and is required for intra-mitochondrial translation. Also catalyzes pseudouridylation of some tRNAs, including synthesis of pseudouridine(55) from uracil-55, in the psi GC loop of a subset of tRNAs. In Mus musculus (Mouse), this protein is Pseudouridylate synthase TRUB2, mitochondrial.